The primary structure comprises 438 residues: Methylenetetrahydrofolate--tRNA-(uracil-5-)-methyltransferase TrmFO (438 aa).

Residue 9 to 14 (GAGLAG) coordinates FAD.

The protein belongs to the MnmG family. TrmFO subfamily. FAD is required as a cofactor.

Its subcellular location is the cytoplasm. It catalyses the reaction uridine(54) in tRNA + (6R)-5,10-methylene-5,6,7,8-tetrahydrofolate + NADH + H(+) = 5-methyluridine(54) in tRNA + (6S)-5,6,7,8-tetrahydrofolate + NAD(+). The enzyme catalyses uridine(54) in tRNA + (6R)-5,10-methylene-5,6,7,8-tetrahydrofolate + NADPH + H(+) = 5-methyluridine(54) in tRNA + (6S)-5,6,7,8-tetrahydrofolate + NADP(+). Functionally, catalyzes the folate-dependent formation of 5-methyl-uridine at position 54 (M-5-U54) in all tRNAs. The polypeptide is Methylenetetrahydrofolate--tRNA-(uracil-5-)-methyltransferase TrmFO (Lactobacillus acidophilus (strain ATCC 700396 / NCK56 / N2 / NCFM)).